A 433-amino-acid polypeptide reads, in one-letter code: O-methyltransferase hasC (433 aa).

S-adenosyl-L-methionine-binding positions include glutamate 265 and 293-295 (GDF). The active-site Proton acceptor is histidine 313. The interval 413–433 (SPRANGNGNSAGGLEWESELM) is disordered.

The protein belongs to the class I-like SAM-binding methyltransferase superfamily. Cation-independent O-methyltransferase family. COMT subfamily.

Its pathway is secondary metabolite biosynthesis. O-methyltransferase; part of the gene cluster that mediates the biosynthesis of hexadehydro-astechrome (HAS), a tryptophan-derived iron(III)-complex that acts as a virulence factor in infected mice. Within the pathway, hasC, with the cytochrome P450 monooxygenase hasH and the FAD-linked oxidoreductase hasG, convert the hasE-prenylated Trp-Ala-dipeptide into an O-methylated diketopiperazine that is then released from the hasD NRPS. The HAS biosynthesis begins with the synthesis of a tethered Trp-Ala dipeptide by the NRPS hasD. The 7-dimethylallyltryptophan synthase hasE then catalyzes the prenylation of the hasD-tethered tryptophan or the resulting tethered Trp-Ala dipeptide at the C-7 position of the indole moiety. HAS biosynthesis continues via tethered intermediates with the succesive actions of the cytochrome P450 monooxygenase hasH, the O-methyltransferase hasC, and the FAD-linked oxidoreductase hasG. The resulting O-methylated diketopiperazine is then released from hasD. Finally, three O-methylated diketopiperazine molecules assemble in a trimeric complex with Fe(III) to produce hexadehydro-astechrome. In Aspergillus fumigatus (strain CBS 144.89 / FGSC A1163 / CEA10) (Neosartorya fumigata), this protein is O-methyltransferase hasC.